Reading from the N-terminus, the 301-residue chain is MADNSSDEYEEDNKEKKKPSQLTPQQGFSENDDDDDDDSSETDSDDDDDDEEHGAPLEGAYDPADYEHLPVSAEIKELFEYISRYTPQLIDLDHKLKPFIPDFIPAVGDIDAFLKVPRPDGKPDHLGLLVLDEPSTKQSDPTVLSLWLTENSKQHNITQHMKVKSLEDAEKNPKAIDTWIESISELHRSKPPATVHYTRPMPDIDTLMQEWSPEFEELLGKVSLPTVEIDCSLAEYIDMICAILDIPFYKSRIQSLHLLFSLYSEFKNSQHFKALAEGKKVFTPPPNSASQAGDAETLTFI.

2 stretches are compositionally biased toward acidic residues: residues 1-12 (MADNSSDEYEED) and 30-52 (ENDD…DDEE). A disordered region spans residues 1-66 (MADNSSDEYE…LEGAYDPADY (66 aa)). Phosphothreonine is present on Thr283.

The protein belongs to the IFT46 family. As to quaternary structure, component of the IFT complex B, at least composed of IFT20, IFT22, IFT25, IFT27, IFT46, IFT52, TRAF3IP1/IFT54, IFT57, IFT74, IFT80, IFT81, and IFT88. Interacts with IFT57, IFT88 and DAW1. Interacts with ARL13B. Interacts with IFT56. Interacts with TTC25. Interacts with IFT70B. As to expression, strongly expressed in ovary and testis, moderately expressed in kidney and brain, and weakly expressed in thymus, heart, lung, liver, spleen and muscle. Expressed in embryonic bone and cartilage, with high expression in non-hypertrophic chondrocytes and weaker expression in hypertrophic chondrocytes.

It localises to the cytoplasm. The protein localises to the cytoskeleton. It is found in the cilium basal body. The protein resides in the cell projection. Its subcellular location is the cilium. In terms of biological role, forms part of a complex involved in intraflagellar transport (IFT), the bi-directional movement of particles required for the assembly, maintenance and functioning of primary cilia. May play a role in chondrocyte maturation and skeletogenesis. The protein is Intraflagellar transport protein 46 homolog (Ift46) of Mus musculus (Mouse).